Reading from the N-terminus, the 142-residue chain is Hemoglobin subunit alpha-1/2 (142 aa).

Residues 2-142 enclose the Globin domain; that stretch reads VLSPADKTNI…VSTVLTSKYR (141 aa). Residue serine 4 is modified to Phosphoserine. N6-succinyllysine is present on lysine 8. Position 9 is a phosphothreonine (threonine 9). The residue at position 12 (lysine 12) is an N6-succinyllysine. At lysine 17 the chain carries N6-acetyllysine; alternate. The residue at position 17 (lysine 17) is an N6-succinyllysine; alternate. The residue at position 25 (tyrosine 25) is a Phosphotyrosine. Position 41 is an N6-succinyllysine (lysine 41). An O2-binding site is contributed by histidine 59. A heme b-binding site is contributed by histidine 88. At serine 103 the chain carries Phosphoserine. A Phosphothreonine modification is found at threonine 109. Serine 125 is subject to Phosphoserine. 2 positions are modified to phosphothreonine: threonine 135 and threonine 138. At serine 139 the chain carries Phosphoserine.

The protein belongs to the globin family. In terms of assembly, heterotetramer of two alpha chains and two beta chains. Red blood cells.

Its function is as follows. Involved in oxygen transport from the lung to the various peripheral tissues. The chain is Hemoglobin subunit alpha-1/2 from Oryctolagus cuniculus (Rabbit).